The following is a 550-amino-acid chain: Methyl-coenzyme M reductase I subunit alpha (550 aa).

Gln-147 provides a ligand contact to coenzyme F430. Coenzyme B contacts are provided by residues Arg-225, Lys-256–His-257, and Arg-270. His-257 carries the post-translational modification Pros-methylhistidine. Arg-271 is modified (5-methylarginine). Residue Tyr-333 coordinates coenzyme M. 2-methylglutamine is present on Gln-400. Tyr-444 contacts coenzyme M. Gly-445 is subject to 1-thioglycine. A (Z)-2,3-didehydroaspartate modification is found at Asp-450. Cys-452 is subject to S-methylcysteine.

The protein belongs to the methyl-coenzyme M reductase alpha subunit family. MCR is a hexamer of two alpha, two beta, and two gamma chains, forming a dimer of heterotrimers. It depends on coenzyme F430 as a cofactor. In terms of processing, the alpha subunit contains six modified amino acids near the active site region. Is methylated on His-257, Arg-271, Gln-400 and Cys-452, probably by the action of specific S-adenosylmethionine-dependent methyltransferases. Also contains a thioglycine at position 445, forming a thiopeptide bond. Contains a didehydroaspartate residue at position 450. The methylation on C5 of Arg-271 is a post-translational methylation not essential in vivo, but which plays a role for the stability and structural integrity of MCR.

Its subcellular location is the cytoplasm. It catalyses the reaction coenzyme B + methyl-coenzyme M = methane + coenzyme M-coenzyme B heterodisulfide. It functions in the pathway one-carbon metabolism; methyl-coenzyme M reduction; methane from methyl-coenzyme M: step 1/1. Methyl-coenzyme M reductase activity is inhibited by 3-nitrooxypropanol (3-NOP) in vitro and in vivo, by oxidation of its active site Ni(I), which stops both growth and methanogenesis. Is also inhibited by the reaction product CoM-S-S-CoB. In terms of biological role, component of the methyl-coenzyme M reductase (MCR) I that catalyzes the reductive cleavage of methyl-coenzyme M (CoM-S-CH3 or 2-(methylthio)ethanesulfonate) using coenzyme B (CoB or 7-mercaptoheptanoylthreonine phosphate) as reductant which results in the production of methane and the mixed heterodisulfide of CoB and CoM (CoM-S-S-CoB). This is the final step in methanogenesis. Neither N-6-mercaptohexanoylthreonine phosphate (H-S-HxoTP) nor N-8-mercaptooctanoylthreonine phosphate (H-SOcoTP) nor any other thiol compound such as CoA or CoM can substitute for CoB as the electron donor. The protein is Methyl-coenzyme M reductase I subunit alpha (mcrA) of Methanothermobacter marburgensis (strain ATCC BAA-927 / DSM 2133 / JCM 14651 / NBRC 100331 / OCM 82 / Marburg) (Methanobacterium thermoautotrophicum).